The sequence spans 109 residues: Ig kappa chain V region K16-167 (109 aa).

Residues 1–23 are framework-1; it reads ALVMTQTPSPVSAAVGGTVTISC. The tract at residues 24 to 35 is complementarity-determining-1; it reads QASQSVYSNNLS. Residues 36-50 form a framework-2 region; that stretch reads WFQQKPGQPPKLLIY. Residues 51–57 are complementarity-determining-2; that stretch reads KASTLAS. Residues 58–89 are framework-3; sequence GVPSRFKGSGSGTQFTLPISGVECDDAATYYC. Positions 90–99 are complementarity-determining-3; that stretch reads QGTNTGNNIV. The interval 100–109 is framework-4; it reads FGTGTEVVVK.

This Oryctolagus cuniculus (Rabbit) protein is Ig kappa chain V region K16-167.